The sequence spans 619 residues: Vitamin B12 transporter BtuB (619 aa).

Residues 1–25 (MINKKRLLLSTVSIMVISGWNQASA) form the signal peptide. The short motif at 31 to 38 (DSLVVTAS) is the TonB box element. Residues 43–157 (PISSILAPYT…IGGVINIITT (115 aa)) enclose the TBDR plug domain. Residues Leu-88, Ser-90, and 115–116 (IS) contribute to the cyanocob(III)alamin site. The TBDR beta-barrel domain occupies 160 to 619 (KLGTSLNVGI…EYYLTGSYNF (460 aa)). The next 3 beta stranded transmembrane spans lie at 163–170 (TSLNVGIG), 174–183 (YQTYDGATQQ), and 189–200 (TVLTAAANYTYT). Residues Asp-204, Gln-216, Asp-218, and Asp-220 each contribute to the Ca(2+) site. The next 2 beta stranded transmembrane spans lie at 222 to 232 (FMSKMLWLGVD) and 237 to 253 (EQVS…NRTS). Ca(2+)-binding residues include Tyr-254 and Asp-255. Cyanocob(III)alamin is bound at residue Ala-256. Asp-268 contributes to the Ca(2+) binding site. 17 beta stranded membrane passes run 270–284 (RELY…VRFN), 286–303 (GIYS…KDYN), 316–332 (SLND…NTFQ), 335–344 (QGIVSTGVDF), 360–376 (KTVR…QQLK), 378–388 (FILEGAIRSDK), 392–407 (AGWN…WEFI), 410–424 (YRLI…KAPT), 441–450 (ESKQWEGGIE), 456–465 (LTWRMTVYRN), 478–495 (YYNI…TGLI), 499–514 (MFQH…PRNS), 522–534 (RRAK…QLDW), 540–556 (DWGL…DKDF), 563–577 (RVKL…LTVS), 590–601 (IANLLDKDYETV), and 607–619 (PGRE…SYNF). Ser-316 provides a ligand contact to cyanocob(III)alamin. Residue Arg-522 coordinates cyanocob(III)alamin. Positions 602–619 (YGYRIPGREYYLTGSYNF) match the TonB C-terminal box motif.

It belongs to the TonB-dependent receptor family. BtuB (TC 1.B.14.3.1) subfamily.

It is found in the cell outer membrane. Involved in the active translocation of vitamin B12 (cyanocobalamin) across the outer membrane to the periplasmic space. It derives its energy for transport by interacting with the trans-periplasmic membrane protein TonB. The chain is Vitamin B12 transporter BtuB from Photorhabdus laumondii subsp. laumondii (strain DSM 15139 / CIP 105565 / TT01) (Photorhabdus luminescens subsp. laumondii).